Reading from the N-terminus, the 362-residue chain is Glutamate 5-kinase (362 aa).

Lysine 3 contributes to the ATP binding site. Positions 43, 128, and 140 each coordinate substrate. ATP contacts are provided by residues 160-161 (TD) and 202-208 (TGGMRTK). The 82-residue stretch at 267 to 348 (AGAILIDDGA…REIENVLGYS (82 aa)) folds into the PUA domain.

Belongs to the glutamate 5-kinase family.

The protein localises to the cytoplasm. It carries out the reaction L-glutamate + ATP = L-glutamyl 5-phosphate + ADP. It functions in the pathway amino-acid biosynthesis; L-proline biosynthesis; L-glutamate 5-semialdehyde from L-glutamate: step 1/2. Functionally, catalyzes the transfer of a phosphate group to glutamate to form L-glutamate 5-phosphate. This is Glutamate 5-kinase from Xanthomonas euvesicatoria pv. vesicatoria (strain 85-10) (Xanthomonas campestris pv. vesicatoria).